Consider the following 583-residue polypeptide: Arginine--tRNA ligase (583 aa).

Residues 131–141 (ANPTGPMHVGH) carry the 'HIGH' region motif.

It belongs to the class-I aminoacyl-tRNA synthetase family. In terms of assembly, monomer.

It is found in the cytoplasm. It catalyses the reaction tRNA(Arg) + L-arginine + ATP = L-arginyl-tRNA(Arg) + AMP + diphosphate. The polypeptide is Arginine--tRNA ligase (Parvibaculum lavamentivorans (strain DS-1 / DSM 13023 / NCIMB 13966)).